Here is a 425-residue protein sequence, read N- to C-terminus: DNA replication and repair protein RecF (425 aa).

30-37 serves as a coordination point for ATP; it reads GPNGHGKT.

The protein belongs to the RecF family.

Its subcellular location is the cytoplasm. Functionally, the RecF protein is involved in DNA metabolism; it is required for DNA replication and normal SOS inducibility. RecF binds preferentially to single-stranded, linear DNA. It also seems to bind ATP. In Corynebacterium jeikeium (strain K411), this protein is DNA replication and repair protein RecF.